A 149-amino-acid polypeptide reads, in one-letter code: Large ribosomal subunit protein uL11 (149 aa).

Belongs to the universal ribosomal protein uL11 family. In terms of assembly, part of the ribosomal stalk of the 50S ribosomal subunit. Interacts with L10 and the large rRNA to form the base of the stalk. L10 forms an elongated spine to which L12 dimers bind in a sequential fashion forming a multimeric L10(L12)X complex. In terms of processing, one or more lysine residues are methylated.

Functionally, forms part of the ribosomal stalk which helps the ribosome interact with GTP-bound translation factors. The polypeptide is Large ribosomal subunit protein uL11 (Methylobacterium nodulans (strain LMG 21967 / CNCM I-2342 / ORS 2060)).